Consider the following 369-residue polypeptide: Glutamate 5-kinase (369 aa).

K9 contributes to the ATP binding site. S49, D136, and N148 together coordinate substrate. ATP is bound by residues 168-169 and 210-216; these read TD and TGGMLTK. The PUA domain occupies 275 to 355; sequence RGGVYVDEGA…KGVFIHRDDW (81 aa).

It belongs to the glutamate 5-kinase family.

It is found in the cytoplasm. It carries out the reaction L-glutamate + ATP = L-glutamyl 5-phosphate + ADP. It participates in amino-acid biosynthesis; L-proline biosynthesis; L-glutamate 5-semialdehyde from L-glutamate: step 1/2. Functionally, catalyzes the transfer of a phosphate group to glutamate to form L-glutamate 5-phosphate. The polypeptide is Glutamate 5-kinase (Neisseria meningitidis serogroup A / serotype 4A (strain DSM 15465 / Z2491)).